A 599-amino-acid polypeptide reads, in one-letter code: Beta-(1--&gt;2)glucan export ATP-binding/permease protein NdvA (599 aa).

The ABC transmembrane type-1 domain occupies 21-311 (GWILAVANLL…VVNFINNVLM (291 aa)). Transmembrane regions (helical) follow at residues 22–42 (WILAVANLLLATAQFAEPILF), 68–88 (LLGAWVGFGLFTIMCSALVAL), 146–166 (EHFAAILSLVVLLPLSLYINW), 168–188 (LAILLFVLCIVFTVLTTLVVH), 254–274 (VITRASTTITVLSIFALGIYL), and 276–296 (QQGLTSVGEIVMFVSFATLLI). An ABC transporter domain is found at 345–579 (VEFQNVSFSY…GGAFAQLARA (235 aa)). Residue 378 to 385 (GATGAGKS) coordinates ATP.

This sequence belongs to the ABC transporter superfamily. Beta-(1--&gt;2)glucan exporter (TC 3.A.1.108.1) family. In terms of assembly, homodimer.

The protein resides in the cell inner membrane. It carries out the reaction [(1-&gt;2)-beta-D-glucosyl](n)(in) + ATP + H2O = [(1-&gt;2)-beta-D-glucosyl](n)(out) + ADP + phosphate + H(+). Involved in beta-(1--&gt;2)glucan export. Transmembrane domains (TMD) form a pore in the inner membrane and the ATP-binding domain (NBD) is responsible for energy generation. This is Beta-(1--&gt;2)glucan export ATP-binding/permease protein NdvA from Rhodopseudomonas palustris (strain ATCC BAA-98 / CGA009).